Consider the following 2171-residue polypeptide: MKQLFNIIHCDHLNGHVRSIYDNLNTDICGIDRVRRVFTFFSIFLLLFGLMFVCSRYKKCHKTLLTFHNGRAAISLLLLALNSFDLARIFLPHQNVRNLNRLFQSSPRDLNYLVVIGSGELWNALFSTLLTLMLMLYHRMVERKKATVFLYASTAVEALTFALLSNELFELVRYEDFLELQTCLVAMSAMCMVSLAMLDGLTVYKECYHDDYLDDYGKIGYKHSMATFYSKSCFWWLTPLLWLGYKEPLELEDLGQMKLEDSARSHYDHFLYIYTEKKKKSNSSPSLWYCYIKNSWQMFALGGILKLAGDLFALIGPLAIQKIVEYIEQLYAQASEPPAKSPGNEVANVLLSTSRILGTEFDEVFGTNIDKGLIYRKSLLLNADGGCDSSDSAGQVQSTSSTSDEKQKNDDSMATPEHVDNPSEPNISHDIGSITNHMTEDTRNIMEFFLIIHYAWAIPFKIAVVIYLLYMNLGISAVIGSIACIVIMTPLQFFIGNAMSKNAEVIAGYTDERLKRIHDTLVGIKVIKLNAWDEVFLKKIQEARRKELKYLNKDATFWTLMAVLTHIATVLITFVTLGVYVWLHRDQEFDLNASRLFSSLALFQQLTVPLLIFPITVPIIIAARVSTRRLERFLKSSEIQKQFEGIRNMARILSKSDASLDMYETQEKSNMTMRTAQAENRLNEKRLAQKSQTPELATNSTPLLQNAEESAEDISPSTVQELGHNKLVQQRRELLRNTPYVAIRPPKMRGSVMERPVEFSVIRARNTDSWRRDSLLLKMPDDIAVSINDGLFTWQPQSQMPVVQLHVPGIIVPKGKLTIVVGKNGSGKTSLLSALLMEMPLLAGNMFWHKTCTISYVSQQPWLLNDTIRENILFGESFRPKRYDFVLEACALKPDIELMPRGDLSIIGERGINISGGQRQRIAIARAIYSSANVVIMDDPLASLDNEVGEHIFQHCIREMLQKSNRTFILVTQQLHRIKEAEYLIAIKDGRVEACGSYADIELMQPRITAEWNAIIAMAKAKNDNPSQNPGEKTAGERWKLLKNVSKLGLQRSISVTMDANVACHADAIDGSGCISVANMQSNVVEEDDQVSVSYPIGNASCGGFNLQRKRSSIYGSRHLMYDVPLPIDECQGDDVIMRPRRRHTLGRRGSRNTNSSHRLSGLSTLTATSESSSISGDVLSRSVLATSCSSYAESSVDGGDLATAAPEPRVQSWQPPQHVTHHQPLSRNASSPPAMEVANPDVKKSEEARRSNTSSESPLDDHVRGSFQQFLRRMSMRRSNKPKNHHHPLSATNSILSISEESPPVVHFPASILATDGNKNETQSEEKPKKCVNIDSKETTINCDDNCYSASDKELRANVTSSPADQEQHNERHVLAEVAGESGRESMPLARLAIDTERKYGKISDDIYLMYIRAAGLPIITIFFITALIWQCLRVYTDIWLQQWSNVHGRVASKGHVVLHPSEQDHEVTYYFRMYAAISCVCIIMALVSTPAGQYAGCNARRNLHDKLLQTILHKTLHFFQVTPLGRIVNRFSNDMAVIDKKIAATGQRLLQFTLLCLSAILINVTITPWILVLTLPICGAYYLIQKFYRCSARELQRIENATNSPVISHLSETIQGVTTIRAFNQQTRFTEILFKRLEANTIAYALLNTSHRWLGVSLDYLGGCIVFVATVTALTAASVSCRRHYEATTSPSASASPSPFETYAVTKSPSELRPSPSLVGLAINYTLLVPIYLNWVVKLLADMEMYAGSVERIAHYAQGQDADADADADADADVDADLDHEPSSNEDVSAEVDRSSQSDAGDKVYPGATTAAGDVDEDGDQQRIGGARGGGGDCGYRQGHENGAEANADKLNAGNVTGDGNHLNFHHPPATAGDKVEQATTKTSVIKDKQLPPQQDDKDKKVVLPNEPARKLERYQSVPISWPQRGDIHFDNVSLRYEGQKQNVISNLTLKIPAGQRIGICGRTGSGKSSLGLSLFGVLQTTRGHIYIDDVDIQRIRPDELRTRLSIIPQDVHLFNATIRENLDPHGYFQDLQLWNCLELAQLKEFVNGHLPLGLDTVICDGGLNLSAGHRQLLCLARAILRGSVCLVLDEATSVLDSSTESALLKAADLAFRGRTIITIAHRLTTILDYDRLIVLDQGRIVEDGNPRELQQLEGSVFRGLLEKGASKW.

Topologically, residues 1–36 are extracellular; sequence MKQLFNIIHCDHLNGHVRSIYDNLNTDICGIDRVRR. The chain crosses the membrane as a helical span at residues 37 to 57; the sequence is VFTFFSIFLLLFGLMFVCSRY. Over 58–71 the chain is Cytoplasmic; the sequence is KKCHKTLLTFHNGR. A helical transmembrane segment spans residues 72–92; that stretch reads AAISLLLLALNSFDLARIFLP. The Extracellular portion of the chain corresponds to 93-112; that stretch reads HQNVRNLNRLFQSSPRDLNY. Residues 113–133 traverse the membrane as a helical segment; it reads LVVIGSGELWNALFSTLLTLM. Over 134–145 the chain is Cytoplasmic; sequence LMLYHRMVERKK. The chain crosses the membrane as a helical span at residues 146–166; that stretch reads ATVFLYASTAVEALTFALLSN. Over 167–182 the chain is Extracellular; the sequence is ELFELVRYEDFLELQT. The chain crosses the membrane as a helical span at residues 183-203; that stretch reads CLVAMSAMCMVSLAMLDGLTV. At 204-224 the chain is on the cytoplasmic side; the sequence is YKECYHDDYLDDYGKIGYKHS. A helical membrane pass occupies residues 225–245; sequence MATFYSKSCFWWLTPLLWLGY. Over 246-299 the chain is Extracellular; sequence KEPLELEDLGQMKLEDSARSHYDHFLYIYTEKKKKSNSSPSLWYCYIKNSWQMF. A helical transmembrane segment spans residues 300 to 320; sequence ALGGILKLAGDLFALIGPLAI. Residues 321 to 447 are Cytoplasmic-facing; that stretch reads QKIVEYIEQL…MTEDTRNIME (127 aa). Positions 344 to 622 constitute an ABC transmembrane type-1 1 domain; the sequence is NEVANVLLST…FPITVPIIIA (279 aa). A disordered region spans residues 388 to 434; the sequence is DSSDSAGQVQSTSSTSDEKQKNDDSMATPEHVDNPSEPNISHDIGSI. Over residues 389–402 the composition is skewed to polar residues; sequence SSDSAGQVQSTSST. Residues 403-421 show a composition bias toward basic and acidic residues; the sequence is SDEKQKNDDSMATPEHVDN. A helical transmembrane segment spans residues 448–468; it reads FFLIIHYAWAIPFKIAVVIYL. The Extracellular portion of the chain corresponds to 469–474; sequence LYMNLG. The helical transmembrane segment at 475–495 threads the bilayer; that stretch reads ISAVIGSIACIVIMTPLQFFI. Topologically, residues 496–562 are cytoplasmic; that stretch reads GNAMSKNAEV…KDATFWTLMA (67 aa). The helical transmembrane segment at 563 to 583 threads the bilayer; the sequence is VLTHIATVLITFVTLGVYVWL. The Extracellular segment spans residues 584 to 600; it reads HRDQEFDLNASRLFSSL. Residues 601–621 traverse the membrane as a helical segment; the sequence is ALFQQLTVPLLIFPITVPIII. The Cytoplasmic portion of the chain corresponds to 622-1409; it reads AARVSTRRLE…KYGKISDDIY (788 aa). The ABC transporter 1 domain maps to 785 to 1014; sequence VSINDGLFTW…QPRITAEWNA (230 aa). 822-829 lines the ATP pocket; sequence GKNGSGKT. A compositionally biased stretch (basic residues) spans 1141-1151; that stretch reads RRRHTLGRRGS. Disordered stretches follow at residues 1141 to 1177 and 1209 to 1265; these read RRRH…SISG and PRVQ…DHVR. The segment covering 1160–1176 has biased composition (low complexity); that stretch reads LSGLSTLTATSESSSIS. The segment covering 1212 to 1232 has biased composition (polar residues); the sequence is QSWQPPQHVTHHQPLSRNASS. Positions 1242–1251 are enriched in basic and acidic residues; it reads DVKKSEEARR. The helical transmembrane segment at 1410 to 1430 threads the bilayer; that stretch reads LMYIRAAGLPIITIFFITALI. Residues 1421 to 1715 form the ABC transmembrane type-1 2 domain; the sequence is ITIFFITALI…AVTKSPSELR (295 aa). Topologically, residues 1431-1468 are extracellular; sequence WQCLRVYTDIWLQQWSNVHGRVASKGHVVLHPSEQDHE. The chain crosses the membrane as a helical span at residues 1469-1489; sequence VTYYFRMYAAISCVCIIMALV. The Cytoplasmic segment spans residues 1490–1558; sequence STPAGQYAGC…QRLLQFTLLC (69 aa). A helical membrane pass occupies residues 1559–1579; that stretch reads LSAILINVTITPWILVLTLPI. At 1580–1655 the chain is on the extracellular side; sequence CGAYYLIQKF…YALLNTSHRW (76 aa). Residues 1656–1676 traverse the membrane as a helical segment; the sequence is LGVSLDYLGGCIVFVATVTAL. Over 1677 to 1718 the chain is Cytoplasmic; it reads TAASVSCRRHYEATTSPSASASPSPFETYAVTKSPSELRPSP. Residues 1719-1739 traverse the membrane as a helical segment; that stretch reads SLVGLAINYTLLVPIYLNWVV. Over 1740–2171 the chain is Extracellular; it reads KLLADMEMYA…GLLEKGASKW (432 aa). Acidic residues predominate over residues 1766 to 1778; sequence ADADADADADVDA. 2 disordered regions span residues 1766-1844 and 1866-1902; these read ADAD…GHEN and NFHH…DKDK. Basic and acidic residues-rich tracts occupy residues 1793–1804 and 1887–1902; these read EVDRSSQSDAGD and VIKD…DKDK. Positions 1930–2165 constitute an ABC transporter 2 domain; the sequence is IHFDNVSLRY…EGSVFRGLLE (236 aa). ATP is bound at residue 1964–1971; the sequence is GRTGSGKS.

It belongs to the ABC transporter superfamily. ABCC family. Conjugate transporter (TC 3.A.1.208) subfamily. In terms of tissue distribution, highly expressed in adult heart. Detected at lower levels in head and abdomen.

The protein resides in the membrane. May function as regulatory subunit of ATP-sensitive potassium channels (KATP) and form KATP channels with a member of the ATP-sensitive inward rectifier potassium channel family. May also have channel activity by itself (in vitro). May protect the heart during hypoxia. May protect against heart failure under conditions of tachycardic stress. The protein is ATP-binding cassette sub-family C member Sur (Sur) of Drosophila melanogaster (Fruit fly).